The sequence spans 542 residues: Putative cysteine ligase BshC (542 aa).

A coiled-coil region spans residues 458 to 479; that stretch reads LTKNATLLQAQIDFLHQTLQRA.

It belongs to the BshC family.

In terms of biological role, involved in bacillithiol (BSH) biosynthesis. May catalyze the last step of the pathway, the addition of cysteine to glucosamine malate (GlcN-Mal) to generate BSH. The sequence is that of Putative cysteine ligase BshC from Geobacillus sp. (strain WCH70).